Reading from the N-terminus, the 486-residue chain is Ribosomal RNA small subunit methyltransferase F (486 aa).

S-adenosyl-L-methionine contacts are provided by residues 124 to 130 (ASAPGSK), E148, D175, and D193. C246 (nucleophile) is an active-site residue.

The protein belongs to the class I-like SAM-binding methyltransferase superfamily. RsmB/NOP family.

It is found in the cytoplasm. The catalysed reaction is cytidine(1407) in 16S rRNA + S-adenosyl-L-methionine = 5-methylcytidine(1407) in 16S rRNA + S-adenosyl-L-homocysteine + H(+). Specifically methylates the cytosine at position 1407 (m5C1407) of 16S rRNA. In Shewanella baltica (strain OS195), this protein is Ribosomal RNA small subunit methyltransferase F.